Here is a 254-residue protein sequence, read N- to C-terminus: Putative hydro-lyase SACE_1553 (254 aa).

It belongs to the D-glutamate cyclase family.

This is Putative hydro-lyase SACE_1553 from Saccharopolyspora erythraea (strain ATCC 11635 / DSM 40517 / JCM 4748 / NBRC 13426 / NCIMB 8594 / NRRL 2338).